Here is a 247-residue protein sequence, read N- to C-terminus: Uridylate kinase (247 aa).

19 to 22 (KISG) is a binding site for ATP. Gly-61 serves as a coordination point for UMP. ATP contacts are provided by Gly-62 and Arg-66. UMP is bound by residues Asp-81 and 142–149 (TGNPFFTT). ATP is bound by residues Thr-169, Gln-170, Tyr-175, and Asp-178.

The protein belongs to the UMP kinase family. As to quaternary structure, homohexamer.

It localises to the cytoplasm. The catalysed reaction is UMP + ATP = UDP + ADP. Its pathway is pyrimidine metabolism; CTP biosynthesis via de novo pathway; UDP from UMP (UMPK route): step 1/1. Its activity is regulated as follows. Inhibited by UTP. Catalyzes the reversible phosphorylation of UMP to UDP. The polypeptide is Uridylate kinase (Wolbachia pipientis wMel).